The chain runs to 742 residues: Photosystem I P700 chlorophyll a apoprotein A2 (742 aa).

A run of 8 helical transmembrane segments spans residues 46–69 (LFST…FHIA), 135–158 (LFQA…LHLQ), 175–199 (LNHH…HVAI), 273–291 (IAHH…GHMY), 336–359 (LHFQ…QHMG), 375–401 (SALY…IFFV), 423–445 (ALIS…IYVH), and 525–543 (FLVH…LILI). C567 and C576 together coordinate [4Fe-4S] cluster. 2 helical membrane-spanning segments follow: residues 583–604 (AMYL…YWHW) and 651–673 (LSPW…MFLI). Residues H662, M670, and Y678 each coordinate divinyl chlorophyll a. Phylloquinone is bound at residue W679. The chain crosses the membrane as a helical span at residues 715-735 (LVGLAHFTIGNILTFGAFVIA).

Belongs to the PsaA/PsaB family. As to quaternary structure, the PsaA/B heterodimer binds the P700 divinyl chlorophyll special pair and subsequent electron acceptors. PSI consists of a core antenna complex that captures photons, and an electron transfer chain that converts photonic excitation into a charge separation. The cyanobacterial PSI reaction center is composed of one copy each of PsaA,B,C,D,E,F,I,J,K,L,M and X, and forms trimeric complexes. PSI electron transfer chain: 5 divinyl chlorophyll a, 1 divinyl chlorophyll a', 2 phylloquinones and 3 4Fe-4S clusters. PSI core antenna: 90 divinyl chlorophyll a, 22 carotenoids, 3 phospholipids and 1 galactolipid. P700 is a divinyl chlorophyll a/divinyl chlorophyll a' dimer, A0 is one or more divinyl chlorophyll a, A1 is one or both phylloquinones and FX is a shared 4Fe-4S iron-sulfur center. is required as a cofactor.

The protein resides in the cellular thylakoid membrane. It carries out the reaction reduced [plastocyanin] + hnu + oxidized [2Fe-2S]-[ferredoxin] = oxidized [plastocyanin] + reduced [2Fe-2S]-[ferredoxin]. PsaA and PsaB bind P700, the primary electron donor of photosystem I (PSI), as well as the electron acceptors A0, A1 and FX. PSI is a plastocyanin/cytochrome c6-ferredoxin oxidoreductase, converting photonic excitation into a charge separation, which transfers an electron from the donor P700 chlorophyll pair to the spectroscopically characterized acceptors A0, A1, FX, FA and FB in turn. Oxidized P700 is reduced on the lumenal side of the thylakoid membrane by plastocyanin or cytochrome c6. The protein is Photosystem I P700 chlorophyll a apoprotein A2 of Prochlorococcus marinus (strain MIT 9301).